The chain runs to 537 residues: Putative cysteine ligase BshC (537 aa).

The stretch at 422–450 forms a coiled coil; the sequence is IEKVEGMIEQQRRLNKDLLDEVAGNQNNI.

The protein belongs to the BshC family.

Its function is as follows. Involved in bacillithiol (BSH) biosynthesis. May catalyze the last step of the pathway, the addition of cysteine to glucosamine malate (GlcN-Mal) to generate BSH. This Staphylococcus aureus (strain USA300) protein is Putative cysteine ligase BshC.